Here is a 213-residue protein sequence, read N- to C-terminus: Uridine kinase (213 aa).

15-22 (GASASGKS) provides a ligand contact to ATP.

The protein belongs to the uridine kinase family.

Its subcellular location is the cytoplasm. The catalysed reaction is uridine + ATP = UMP + ADP + H(+). It catalyses the reaction cytidine + ATP = CMP + ADP + H(+). It participates in pyrimidine metabolism; CTP biosynthesis via salvage pathway; CTP from cytidine: step 1/3. The protein operates within pyrimidine metabolism; UMP biosynthesis via salvage pathway; UMP from uridine: step 1/1. In Yersinia pseudotuberculosis serotype O:1b (strain IP 31758), this protein is Uridine kinase.